The primary structure comprises 227 residues: MIVSIPDVLSPAEAAAMRAQLEASDAWVDGRATAGYQGAPVKRNQQIGEGSPIALEMGDRIVASLERHPLFISAALPNKVYPPLFNRYEGGMHFGSHVDGAIRLVPGSGARVRTDVSVTLFLTPPDEYDGGELLIEDTFGVQEVKLPAGHAIVYPGTSLHQVRPVTRGARVASFFWVQSLVRDDTQRAMLFDLDGAIQRLNASNGDEAARRTLVGCYHNLLRMWSDT.

The 101-residue stretch at 79 to 179 folds into the Fe2OG dioxygenase domain; that stretch reads KVYPPLFNRY…RVASFFWVQS (101 aa). Residues His97, Asp99, and His160 each contribute to the Fe cation site. Residue Arg170 coordinates 2-oxoglutarate.

The cofactor is Fe(2+). Requires L-ascorbate as cofactor.

The chain is PKHD-type hydroxylase Bphy_5374 from Paraburkholderia phymatum (strain DSM 17167 / CIP 108236 / LMG 21445 / STM815) (Burkholderia phymatum).